Reading from the N-terminus, the 348-residue chain is Rhodopsin (348 aa).

Position 1 is an N-acetylmethionine (M1). Topologically, residues 1–36 are extracellular; sequence MNGTEGPNFYVPFSNATGVVRSPFEYPQYYLAEPWQ. N-linked (GlcNAc...) asparagine glycans are attached at residues N2 and N15. The chain crosses the membrane as a helical span at residues 37–61; it reads FSMLAAYMFMLIVLGFPINFLTLYV. Over 62 to 73 the chain is Cytoplasmic; sequence TVQHKKLRTPLN. A helical transmembrane segment spans residues 74-96; the sequence is YILLNLAVADLFMVFGGFTTTLY. Topologically, residues 97 to 110 are extracellular; it reads TSLHGYFVFGPTGC. C110 and C187 form a disulfide bridge. Residues 111–133 form a helical membrane-spanning segment; that stretch reads NLEGFFATLGGEIALWSLVVLAI. The 'Ionic lock' involved in activated form stabilization motif lies at 134-136; that stretch reads ERY. The Cytoplasmic segment spans residues 134-152; sequence ERYVVVCKPMSNFRFGENH. The helical transmembrane segment at 153–173 threads the bilayer; the sequence is AIMGLVFTWIMALACAAPPLV. Residues 174–202 lie on the Extracellular side of the membrane; the sequence is GWSRYIPEGMQCSCGIDYYTLKPEVNNES. E201 provides a ligand contact to Zn(2+). Residues 203–224 form a helical membrane-spanning segment; the sequence is FVIYMFVVHFFIPLFVIFFCYG. At 225 to 252 the chain is on the cytoplasmic side; it reads QLVFTVKEAAAQQQESATTQKAEKEVTR. Residues 253 to 274 traverse the membrane as a helical segment; it reads MVIIMVIAFLICWLPYAGVAFY. Residues 275-286 lie on the Extracellular side of the membrane; sequence IFTHQGSNFGPI. Residue Q279 coordinates Zn(2+). Residues 287-308 form a helical membrane-spanning segment; the sequence is FMTLPAFFAKTASIYNPVIYIM. N6-(retinylidene)lysine is present on K296. Residues 309-348 lie on the Cytoplasmic side of the membrane; the sequence is MNKQFRTCMITTLCCGKNPLGDDEASTTASKTETSQVAPA. S-palmitoyl cysteine attachment occurs at residues C322 and C323. Positions 330 to 348 are interaction with SAG; it reads DDEASTTASKTETSQVAPA. S334 is modified (phosphoserine). Phosphothreonine occurs at positions 335 and 336. Residue S338 is modified to Phosphoserine. 2 positions are modified to phosphothreonine: T340 and T342. At S343 the chain carries Phosphoserine.

Belongs to the G-protein coupled receptor 1 family. Opsin subfamily. In terms of assembly, homodimer. May form a complex composed of RHO, GRK1 and RCVRN in a Ca(2+)-dependent manner; RCVRN prevents the interaction between GRK1 and RHO. Interacts with GRK1. Interacts (phosphorylated form) with SAG. Interacts with GNAT1. Interacts with GNAT3. SAG and G-proteins compete for a common binding site. Interacts with PRCD; the interaction promotes PRCD stability. Forms a complex with ASAP1 and ARF4. Forms a complex with ASAP1, RAB11A, Rabin8/RAB3IP, ARF4 and RAB11FIP3; the complex regulates Golgi-to-cilia rhodopsin/RHO transport in photoreceptors. Phosphorylated on some or all of the serine and threonine residues present in the C-terminal region. Post-translationally, contains one covalently linked retinal chromophore. Upon light absorption, the covalently bound 11-cis-retinal is converted to all-trans-retinal. After hydrolysis of the Schiff base and release of the covalently bound all-trans-retinal, active rhodopsin is regenerated by binding of a fresh molecule of 11-cis-retinal.

It localises to the membrane. It is found in the cell projection. The protein resides in the cilium. Its subcellular location is the photoreceptor outer segment. Its function is as follows. Photoreceptor required for image-forming vision at low light intensity. Required for photoreceptor cell viability after birth. Light-induced isomerization of 11-cis to all-trans retinal triggers a conformational change that activates signaling via G-proteins. Subsequent receptor phosphorylation mediates displacement of the bound G-protein alpha subunit by the arrestin SAG and terminates signaling. This is Rhodopsin (RHO) from Otolemur crassicaudatus (Brown greater galago).